A 478-amino-acid chain; its full sequence is Probable serine carboxypeptidase CPVL (478 aa).

Positions M1 to G22 are cleaved as a signal peptide. N83 and N134 each carry an N-linked (GlcNAc...) asparagine glycan. The active site involves S206. N-linked (GlcNAc...) asparagine glycosylation is found at N309 and N350. Residues D390 and H450 contribute to the active site.

Belongs to the peptidase S10 family.

May be involved in the digestion of phagocytosed particles in the lysosome, participation in an inflammatory protease cascade, and trimming of peptides for antigen presentation. This is Probable serine carboxypeptidase CPVL (Cpvl) from Mus musculus (Mouse).